The primary structure comprises 343 residues: D-beta-hydroxybutyrate dehydrogenase, mitochondrial (343 aa).

The N-terminal 46 residues, 1–46 (MLAARLSRPLSQLPGKALSVRDRENGTRHTLLFYPASFSPDTRRTY), are a transit peptide targeting the mitochondrion. 60–84 (ITGCDSGFGFSLAKHLHSKGFLVFA) contacts NAD(+). N6-acetyllysine occurs at positions 73 and 97. Residue lysine 103 is modified to N6-acetyllysine; alternate. Lysine 103 is modified (N6-succinyllysine; alternate). Residues lysine 132 and lysine 177 each carry the N6-acetyllysine modification. Residue methionine 196 participates in substrate binding. Residue cysteine 209 is the Proton acceptor of the active site. An N6-acetyllysine modification is found at lysine 212. Serine 219 is a glycosylation site (O-linked (GlcNAc) serine). Residue serine 246 is modified to Phosphoserine. The residue at position 258 (lysine 258) is an N6-acetyllysine. Residue lysine 259 is modified to N6-acetyllysine; alternate. Residue lysine 259 is modified to N6-succinyllysine; alternate. Lysine 280 is subject to N6-acetyllysine.

This sequence belongs to the short-chain dehydrogenases/reductases (SDR) family. In terms of assembly, homotetramer. Post-translationally, acetylation of Lys-132 is observed in liver mitochondria from fasted mice but not from fed mice.

It is found in the mitochondrion inner membrane. The protein localises to the mitochondrion matrix. It carries out the reaction (R)-3-hydroxybutanoate + NAD(+) = acetoacetate + NADH + H(+). Its activity is regulated as follows. Requires phosphatidylcholine as an allosteric activator for enzymatic activity. This chain is D-beta-hydroxybutyrate dehydrogenase, mitochondrial, found in Mus musculus (Mouse).